A 353-amino-acid polypeptide reads, in one-letter code: Heat-inducible transcription repressor HrcA (353 aa).

Belongs to the HrcA family.

Negative regulator of class I heat shock genes (grpE-dnaK-dnaJ and groELS operons). Prevents heat-shock induction of these operons. This Anaeromyxobacter dehalogenans (strain 2CP-1 / ATCC BAA-258) protein is Heat-inducible transcription repressor HrcA.